Reading from the N-terminus, the 448-residue chain is Adenylosuccinate synthetase (448 aa).

GTP is bound by residues 36–42 (GDEGKGK) and 64–66 (GHT). The active-site Proton acceptor is the D37. Mg(2+) is bound by residues D37 and G64. IMP is bound by residues 37–40 (DEGK), 62–65 (NAGH), T154, R168, N246, T261, and R325. The active-site Proton donor is H65. 321-327 (VTTKRKR) contributes to the substrate binding site. GTP is bound by residues R327, 353 to 355 (KLD), and 436 to 438 (GVG).

It belongs to the adenylosuccinate synthetase family. In terms of assembly, homodimer. Requires Mg(2+) as cofactor.

It localises to the cytoplasm. It catalyses the reaction IMP + L-aspartate + GTP = N(6)-(1,2-dicarboxyethyl)-AMP + GDP + phosphate + 2 H(+). It functions in the pathway purine metabolism; AMP biosynthesis via de novo pathway; AMP from IMP: step 1/2. Its function is as follows. Plays an important role in the de novo pathway and in the salvage pathway of purine nucleotide biosynthesis. Catalyzes the first committed step in the biosynthesis of AMP from IMP. The sequence is that of Adenylosuccinate synthetase from Drosophila ananassae (Fruit fly).